The sequence spans 121 residues: Flagellar protein FliT (121 aa).

The interval 1–50 (MNNAPHLYFAWQQLVEKSQLMLRLATEEQWDELIASEMAYVNAVQEIAHL) is required for homodimerization. A fliD binding region spans residues 60–98 (MQEQLRPMLHLILDNESKVKQLLQIRMDELAKLVGQSSV).

This sequence belongs to the FliT family. As to quaternary structure, homodimer. Interacts with FliD and FlhC.

The protein localises to the cytoplasm. The protein resides in the cytosol. Functionally, dual-function protein that regulates the transcription of class 2 flagellar operons and that also acts as an export chaperone for the filament-capping protein FliD. As a transcriptional regulator, acts as an anti-FlhDC factor; it directly binds FlhC, thus inhibiting the binding of the FlhC/FlhD complex to class 2 promoters, resulting in decreased expression of class 2 flagellar operons. As a chaperone, effects FliD transition to the membrane by preventing its premature polymerization, and by directing it to the export apparatus. In Shigella flexneri serotype 5b (strain 8401), this protein is Flagellar protein FliT.